Consider the following 1712-residue polypeptide: Neurexin-2 (1712 aa).

The first 28 residues, 1–28 (MASGSRWRPTPPPLLLLLLLALAARADG), serve as a signal peptide directing secretion. The 178-residue stretch at 29–206 (LEFGGGPGQW…LRGATADPLC (178 aa)) folds into the Laminin G-like 1 domain. At 29-1636 (LEFGGGPGQW…EVIRESSSTT (1608 aa)) the chain is on the extracellular side. Residue N60 is glycosylated (N-linked (GlcNAc...) asparagine). The region spanning 202–242 (ADPLCAPARNPCANGGLCTVLAPGEVGCDCSHTGFGGKFCS) is the EGF-like 1 domain. 3 disulfides stabilise this stretch: C206-C219, C213-C229, and C231-C241. Laminin G-like domains are found at residues 289–486 (VATF…SFRC) and 493–686 (DPVT…APFC). D335 contacts Ca(2+). N338 is a glycosylation site (N-linked (GlcNAc...) asparagine). L352 and M420 together coordinate Ca(2+). Cystine bridges form between C450–C486, C657–C686, C694–C705, C699–C714, and C716–C726. Residues 690-727 (TLKQCASAPCRNGGVCREGWNRFICDCIGTGFLGRVCE) form the EGF-like 2 domain. Laminin G-like domains are found at residues 732-904 (VLSY…ITYC) and 918-1093 (DPVT…ERGC). D779 and L796 together coordinate Ca(2+). N841 is a glycosylation site (N-linked (GlcNAc...) asparagine). R854 contributes to the Ca(2+) binding site. Disulfide bonds link C1065-C1093, C1100-C1111, C1105-C1120, and C1122-C1132. Residues 1096-1133 (PSTTCTEESCANQGVCLQQWDGFTCDCTMTSYGGPVCN) enclose the EGF-like 3 domain. The Laminin G-like 6 domain occupies 1137-1345 (TTYIFGKGGA…HLRLVGEGPS (209 aa)). Ca(2+) contacts are provided by D1189 and V1206. N-linked (GlcNAc...) asparagine glycosylation is present at N1236. Ca(2+) contacts are provided by I1288 and N1290. Positions 1373-1392 (ATTTTRRGRSPTLRDSTTQN) are disordered. S1400 carries an O-linked (Xyl...) (heparan sulfate) serine glycan. Disordered regions lie at residues 1458-1489 (ATQD…CEEP) and 1525-1626 (TLLS…PGAV). Residues 1637-1657 (GMVVGIVAAAALCILILLYAM) traverse the membrane as a helical segment. At 1658 to 1712 (YKYRNRDEGSYQVDQSRNYISNSAQSNGAVVKEKAPAAPKTPSKAKKNKDKEYYV) the chain is on the cytoplasmic side. The segment at 1679 to 1712 (NSAQSNGAVVKEKAPAAPKTPSKAKKNKDKEYYV) is disordered.

This sequence belongs to the neurexin family. The laminin G-like domain 1 binds to NXPH1. Interacts with PATJ. Interacts with CBLN1, CBLN2 and, less avidly, with CBLN4. Specific isoforms bind neuroligins NLGN1, NLGN2 and NLGN3. Specific isoforms bind to alpha-dystroglycan. Interacts (via Laminin G-like 1 domain) with IGSF21 (Ig-like 1 domain) in a trans-interaction manner. Interacts with CLSTN3. O-glycosylated; contains heparan sulfate. Heparan sulfate attachment is required for synapse development by mediating interactions with neuroligins. Predominantly expressed in brain.

The protein resides in the presynaptic cell membrane. Functionally, neuronal cell surface protein that may be involved in cell recognition and cell adhesion. May mediate intracellular signaling. This chain is Neurexin-2 (NRXN2), found in Homo sapiens (Human).